We begin with the raw amino-acid sequence, 652 residues long: Cleavage and polyadenylation specificity factor subunit 6 (652 aa).

Positions 20 to 85 (QAQDEFGGDG…GVYHQSSGSL (66 aa)) are disordered. The RRM domain occupies 93 to 173 (YQLYVGNLTW…QAPVVTYPSK (81 aa)). Disordered regions lie at residues 184–440 (KTRP…QQMG) and 518–652 (SYNR…RSRH). Residues 187–203 (PVPPPQQNGPPRGPAPP) are compositionally biased toward pro residues. Residues 205-223 (MGGGPMPTGHPGGPQGGGP) are compositionally biased toward gly residues. 3 stretches are compositionally biased toward pro residues: residues 256-266 (SGPPRMQPPMH), 295-307 (GPRP…PPQR), and 338-352 (PQGP…PGPG). A compositionally biased stretch (low complexity) spans 391–406 (PGMNMPPQQGMNMTPQ). The span at 420–435 (GPWPPPQGKPPGPFPD) shows a compositional bias: pro residues. Positions 518 to 528 (SYNRRERSRSR) are enriched in basic and acidic residues. A compositionally biased stretch (basic residues) spans 529–538 (ERSHRSRQRR). Over residues 539–590 (ERSTSRYRERSRERERDRDRERERDGGSYRERSRSRERERQAPDHYRDDSRS) the composition is skewed to basic and acidic residues. Position 596 is a phosphoserine (Ser596). Over residues 598-610 (EPVVAEAAEAPSS) the composition is skewed to low complexity. Residues 612–652 (RYYEDRERYRSSDRERRDRDRDRDRERERDRDRREEHRSRH) are compositionally biased toward basic and acidic residues.

Belongs to the RRM CPSF6/7 family.

The protein resides in the nucleus. In terms of biological role, may play a role in pre-mRNA 3'-processing. This chain is Cleavage and polyadenylation specificity factor subunit 6, found in Drosophila melanogaster (Fruit fly).